The primary structure comprises 460 residues: MFTIKLLLFIVPLVISSRIDQDNSSFDSLSPEPKSRFAMLDDVKILANGLLQLGHGLKDFVHKTKGQINDIFQKLNIFDQSFYDLSLQTSEIKEEEKELRRTTYKLQVKNEEVKNMSLELNSKLESLLEEKILLQQKVKYLEEQLTNLIQNQPETPEHPEVTSLKTFVEKQDNSIKDLLQTVEDQYKQLNQQHSQIKEIENQLRRTSIQEPTEISLSSKPRAPRTTPFLQLNEIRNVKHDGIPAECTTIYNRGEHTSGMYAIRPSNSQVFHVYCDVISGSPWTLIQHRIDGSQNFNETWENYKYGFGRLDGEFWLGLEKIYSIVKQSNYVLRIELEDWKDNKHYIEYSFYLGNHETNYTLHLVAITGNVPNAIPENKDLVFSTWDHKAKGHFNCPEGYSGGWWWHDECGENNLNGKYNKPRAKSKPERRRGLSWKSQNGRLYSIKSTKMLIHPTDSESFE.

The first 16 residues, 1-16 (MFTIKLLLFIVPLVIS), serve as a signal peptide directing secretion. The interval 17–165 (SRIDQDNSSF…PEHPEVTSLK (149 aa)) is sufficient to inhibit LPL lipase activity. The sufficient to inhibit LIPG/EL phospholipase activity stretch occupies residues 17 to 207 (SRIDQDNSSF…EIENQLRRTS (191 aa)). Residues 32-56 (EPKSRFAMLDDVKILANGLLQLGHG) are required for inhibition of LPL lipase activity. The stretch at 85–210 (LSLQTSEIKE…NQLRRTSIQE (126 aa)) forms a coiled coil. Asn-115 carries an N-linked (GlcNAc...) asparagine glycan. Thr-226 carries an O-linked (GalNAc) threonine glycan. The Fibrinogen C-terminal domain maps to 237–455 (VKHDGIPAEC…STKMLIHPTD (219 aa)). A disulfide bridge connects residues Cys-246 and Cys-274. 2 N-linked (GlcNAc...) asparagine glycosylation sites follow: Asn-296 and Asn-357. The cysteines at positions 394 and 408 are disulfide-linked.

Interacts with ANGPTL8. Interacts with ITGB3. O-glycosylated at Thr-226 by GALNT2; blocks processing and activation by proprotein convertases. In terms of processing, in part proteolytically cleaved by proprotein convertases; proposed to be involved in activation. In terms of tissue distribution, expressed principally in liver. Weakly expressed in kidney. Binds to adipocytes. Increased expression and colocalization with activated ITGB3 in glomeruli of patients with nephrotic syndrome showing effaced podocyte foot processes (at protein level).

It is found in the secreted. It localises to the cell projection. Its subcellular location is the lamellipodium. In terms of biological role, acts in part as a hepatokine that is involved in regulation of lipid and glucose metabolism. Proposed to play a role in the trafficking of energy substrates to either storage or oxidative tissues in response to food intake. Has a stimulatory effect on plasma triglycerides (TG), which is achieved by suppressing plasma TG clearance via inhibition of LPL activity. The inhibition of LPL activity appears to be an indirect mechanism involving recruitment of proprotein convertases PCSK6 and FURIN to LPL leading to cleavage and dissociation of LPL from the cell surface; the function does not require ANGPTL3 proteolytic cleavage but seems to be mediated by the N-terminal domain, and is not inhibited by GPIHBP1. Can inhibit endothelial lipase, causing increased plasma levels of high density lipoprotein (HDL) cholesterol and phospholipids. Can bind to adipocytes to activate lipolysis, releasing free fatty acids and glycerol. Suppresses LPL specifically in oxidative tissues which is required to route very low density lipoprotein (VLDL)-TG to white adipose tissue (WAT) for storage in response to food; the function may involve cooperation with circulating, liver-derived ANGPTL8 and ANGPTL4 expression in WAT. Contributes to lower plasma levels of low density lipoprotein (LDL)-cholesterol by a mechanism that is independent of the canonical pathway implicating APOE and LDLR. May stimulate hypothalamic LPL activity. In vitro inhibits LPL activity; not effective on GPIHBP1-stabilized LPL. Functionally, involved in angiogenesis. Binds to endothelial cells via integrin alpha-V/beta-3 (ITGAV:ITGB3), activates FAK, MAPK and Akt signaling pathways and induces cell adhesion and cell migration. Secreted from podocytes, may modulate properties of glomerular endothelial cells involving integrin alpha-V/beta-3 and Akt signaling. May increase the motility of podocytes. May induce actin filament rearrangements in podocytes implicating integrin alpha-V/beta-3 and Rac1 activation. Binds to hematopoietic stem cells (HSC) and is involved in the regulation of HSC activity probably implicating down-regulation of IKZF1/IKAROS. The polypeptide is Angiopoietin-related protein 3 (ANGPTL3) (Homo sapiens (Human)).